The chain runs to 209 residues: Kynurenine formamidase (209 aa).

F18 is a binding site for substrate. 3 residues coordinate Zn(2+): H48, H52, and D54. H58 serves as the catalytic Proton donor/acceptor. Zn(2+) contacts are provided by H160 and E172.

This sequence belongs to the Cyclase 1 superfamily. KynB family. Homodimer. Zn(2+) serves as cofactor.

The catalysed reaction is N-formyl-L-kynurenine + H2O = L-kynurenine + formate + H(+). The protein operates within amino-acid degradation; L-tryptophan degradation via kynurenine pathway; L-kynurenine from L-tryptophan: step 2/2. Catalyzes the hydrolysis of N-formyl-L-kynurenine to L-kynurenine, the second step in the kynurenine pathway of tryptophan degradation. In Bordetella avium (strain 197N), this protein is Kynurenine formamidase.